The chain runs to 227 residues: Orotidine 5'-phosphate decarboxylase (227 aa).

Residues aspartate 8, lysine 30, 59 to 68 (DLKLYDIPNT), threonine 118, arginine 178, glutamine 187, glycine 207, and arginine 208 each bind substrate. Catalysis depends on lysine 61, which acts as the Proton donor.

This sequence belongs to the OMP decarboxylase family. Type 1 subfamily. Homodimer.

It catalyses the reaction orotidine 5'-phosphate + H(+) = UMP + CO2. The protein operates within pyrimidine metabolism; UMP biosynthesis via de novo pathway; UMP from orotate: step 2/2. Functionally, catalyzes the decarboxylation of orotidine 5'-monophosphate (OMP) to uridine 5'-monophosphate (UMP). In Nitratiruptor sp. (strain SB155-2), this protein is Orotidine 5'-phosphate decarboxylase.